We begin with the raw amino-acid sequence, 190 residues long: MAVLVLASASPRRLDLLRQIAIMPGLVDPAHVDETPLKGELPVPHARRLAEAKALAVAGRHPGAFVLAADTVVACGRRILPKAEDEATARQCLELLSGRRHRVVGGICLIAPDGRIGRRTVTTSVTFKRLSHAEMAAYAASGEWDGKAGGYAIQGLAARYVRDIQGSYSNIVGLSLFETAQLLDGFGFAP.

Residue Asp70 is the Proton acceptor of the active site.

The protein belongs to the Maf family. YhdE subfamily. The cofactor is a divalent metal cation.

It localises to the cytoplasm. The catalysed reaction is dTTP + H2O = dTMP + diphosphate + H(+). The enzyme catalyses UTP + H2O = UMP + diphosphate + H(+). Its function is as follows. Nucleoside triphosphate pyrophosphatase that hydrolyzes dTTP and UTP. May have a dual role in cell division arrest and in preventing the incorporation of modified nucleotides into cellular nucleic acids. In Paramagnetospirillum magneticum (strain ATCC 700264 / AMB-1) (Magnetospirillum magneticum), this protein is dTTP/UTP pyrophosphatase.